The chain runs to 163 residues: Large ribosomal subunit protein uL15 (163 aa).

Over residues methionine 1–glycine 29 the composition is skewed to basic residues. Disordered regions lie at residues methionine 1 to arginine 59 and valine 135 to serine 163. Basic and acidic residues-rich tracts occupy residues alanine 33–leucine 46 and leucine 142–aspartate 154.

Belongs to the universal ribosomal protein uL15 family. Part of the 50S ribosomal subunit.

Its function is as follows. Binds to the 23S rRNA. This is Large ribosomal subunit protein uL15 from Natronomonas pharaonis (strain ATCC 35678 / DSM 2160 / CIP 103997 / JCM 8858 / NBRC 14720 / NCIMB 2260 / Gabara) (Halobacterium pharaonis).